Consider the following 278-residue polypeptide: Release factor glutamine methyltransferase (278 aa).

S-adenosyl-L-methionine contacts are provided by residues 120 to 124 (GTGTG), D143, and N184. Residue 184–187 (NPPY) participates in substrate binding.

Belongs to the protein N5-glutamine methyltransferase family. PrmC subfamily.

The enzyme catalyses L-glutaminyl-[peptide chain release factor] + S-adenosyl-L-methionine = N(5)-methyl-L-glutaminyl-[peptide chain release factor] + S-adenosyl-L-homocysteine + H(+). Methylates the class 1 translation termination release factors RF1/PrfA and RF2/PrfB on the glutamine residue of the universally conserved GGQ motif. This is Release factor glutamine methyltransferase from Deinococcus radiodurans (strain ATCC 13939 / DSM 20539 / JCM 16871 / CCUG 27074 / LMG 4051 / NBRC 15346 / NCIMB 9279 / VKM B-1422 / R1).